The following is a 624-amino-acid chain: Iron transport multicopper oxidase FET3 (624 aa).

An N-terminal signal peptide occupies residues 1 to 20 (MRTFLSSFIILTTFLASLIA). The Extracellular portion of the chain corresponds to 21–555 (AETHTWYFKT…KRLPTGFTTK (535 aa)). 2 consecutive Plastocyanin-like domains span residues 46-144 (IGFN…FIIE) and 190-292 (NFLF…LQVN). N-linked (GlcNAc...) asparagine glycans are attached at residues Asn-49 and Asn-77. Residues His-81 and His-83 each coordinate Cu cation. An N-linked (GlcNAc...) asparagine glycan is attached at Asn-113. The Cu cation site is built by His-126 and His-128. N-linked (GlcNAc...) asparagine glycans are attached at residues Asn-194, Asn-198, Asn-244, Asn-265, Asn-292, Asn-300, and Asn-359. The Plastocyanin-like 3 domain maps to 382–499 (NELIYGTNTN…QGLAVVLIED (118 aa)). Residues His-413, His-416, and His-418 each contribute to the Cu cation site. N-linked (GlcNAc...) asparagine glycosylation is present at Asn-441. The Cu cation site is built by His-481, Cys-482, His-483, and His-487. A helical transmembrane segment spans residues 556–576 (GIVALVFSCVAAFLGLFSFSF). The Cytoplasmic portion of the chain corresponds to 577 to 624 (YGMNDIAHVEDKVARDLDIDLEAENEDEEEAVVLNQNSSSSDSNSKPH). The interval 603-624 (DEEEAVVLNQNSSSSDSNSKPH) is disordered. A compositionally biased stretch (low complexity) spans 608-624 (VVLNQNSSSSDSNSKPH).

Belongs to the multicopper oxidase family. The cofactor is Cu cation.

It localises to the cell membrane. Functionally, iron transport multicopper ferroxidase required for Fe(2+) high affinity uptake. Required to oxidize Fe(2+) and release it from the transporter. Essential component of copper-dependent iron transport. The protein is Iron transport multicopper oxidase FET3 (FET3) of Candida albicans (Yeast).